Consider the following 327-residue polypeptide: ATPase ASNA1 homolog (327 aa).

ATP is bound at residue 26–33; the sequence is KGGVGKTT. The active site involves Asp57. 2 residues coordinate ATP: Glu238 and Asn265. The Zn(2+) site is built by Cys274 and Cys277.

The protein belongs to the arsA ATPase family. In terms of assembly, homodimer.

It is found in the cytoplasm. It localises to the endoplasmic reticulum. In terms of biological role, ATPase required for the post-translational delivery of tail-anchored (TA) proteins to the endoplasmic reticulum. Recognizes and selectively binds the transmembrane domain of TA proteins in the cytosol. This complex then targets to the endoplasmic reticulum by membrane-bound receptors, where the tail-anchored protein is released for insertion. This process is regulated by ATP binding and hydrolysis. ATP binding drives the homodimer towards the closed dimer state, facilitating recognition of newly synthesized TA membrane proteins. ATP hydrolysis is required for insertion. Subsequently, the homodimer reverts towards the open dimer state, lowering its affinity for the membrane-bound receptor, and returning it to the cytosol to initiate a new round of targeting. The protein is ATPase ASNA1 homolog of Entamoeba dispar (strain ATCC PRA-260 / SAW760).